The following is an 883-amino-acid chain: Alanine--tRNA ligase (883 aa).

Zn(2+)-binding residues include H563, H567, C677, and H681.

Belongs to the class-II aminoacyl-tRNA synthetase family. Zn(2+) serves as cofactor.

It localises to the cytoplasm. It catalyses the reaction tRNA(Ala) + L-alanine + ATP = L-alanyl-tRNA(Ala) + AMP + diphosphate. Catalyzes the attachment of alanine to tRNA(Ala) in a two-step reaction: alanine is first activated by ATP to form Ala-AMP and then transferred to the acceptor end of tRNA(Ala). Also edits incorrectly charged Ser-tRNA(Ala) and Gly-tRNA(Ala) via its editing domain. This Cereibacter sphaeroides (strain ATCC 17029 / ATH 2.4.9) (Rhodobacter sphaeroides) protein is Alanine--tRNA ligase.